Here is a 128-residue protein sequence, read N- to C-terminus: Azurin (128 aa).

The Plastocyanin-like domain occupies 1 to 128; the sequence is AECKVTVDST…SMMKGTVTVK (128 aa). Cys3 and Cys26 are joined by a disulfide. Residues His46, Cys112, His117, and Met121 each contribute to the Cu cation site.

The protein localises to the periplasm. Transfers electrons from cytochrome c551 to cytochrome oxidase. This Pseudomonas fluorescens biotype A protein is Azurin.